A 103-amino-acid polypeptide reads, in one-letter code: Matrix Gla protein (103 aa).

The signal sequence occupies residues 1-19 (MKSLVLLAILAALAVVTLC). E21 carries the 4-carboxyglutamate modification. Residues S22, S25, and S28 each carry the phosphoserine modification. One can recognise a Gla domain in the interval 51-97 (RAKVQERIRERSKPVHELNREACDDYRLCERYAMVYGYNAAYNRYFR). A 4-carboxyglutamate mark is found at E56, E60, E67, and E71. Cysteines 73 and 79 form a disulfide. The propeptide at 97-103 (RERRGAK) is removed in mature form; probably by carboxypeptidase N.

The protein belongs to the osteocalcin/matrix Gla protein family. In terms of processing, requires vitamin K-dependent gamma-carboxylation for its function.

The protein localises to the secreted. Functionally, associates with the organic matrix of bone and cartilage. Thought to act as an inhibitor of bone formation. The polypeptide is Matrix Gla protein (MGP) (Pongo abelii (Sumatran orangutan)).